The chain runs to 397 residues: SEC14-like protein 6 (397 aa).

Residues 76 to 249 (PPEVVRLYNA…EFGGTMTDPD (174 aa)) form the CRAL-TRIO domain. One can recognise a GOLD domain in the interval 252–383 (PKCLTKINYG…SKRISYTVEV (132 aa)).

This Homo sapiens (Human) protein is SEC14-like protein 6 (SEC14L6).